The primary structure comprises 166 residues: Small ribosomal subunit protein uS5 (166 aa).

An S5 DRBM domain is found at 11 to 74 (LIEKLVSVKR…ENAKKNMVSV (64 aa)).

Belongs to the universal ribosomal protein uS5 family. As to quaternary structure, part of the 30S ribosomal subunit. Contacts proteins S4 and S8.

With S4 and S12 plays an important role in translational accuracy. Functionally, located at the back of the 30S subunit body where it stabilizes the conformation of the head with respect to the body. The protein is Small ribosomal subunit protein uS5 of Francisella tularensis subsp. holarctica (strain LVS).